Consider the following 171-residue polypeptide: Transcription elongation factor GreB (171 aa).

The stretch at Lys53–Ile75 forms a coiled coil.

This sequence belongs to the GreA/GreB family. GreB subfamily.

Necessary for efficient RNA polymerase transcription elongation past template-encoded arresting sites. The arresting sites in DNA have the property of trapping a certain fraction of elongating RNA polymerases that pass through, resulting in locked ternary complexes. Cleavage of the nascent transcript by cleavage factors such as GreA or GreB allows the resumption of elongation from the new 3'terminus. GreB releases sequences of up to 9 nucleotides in length. In Yersinia pestis, this protein is Transcription elongation factor GreB.